Consider the following 497-residue polypeptide: Pentatricopeptide repeat-containing protein At2g36240 (497 aa).

9 PPR repeats span residues Leu156–Leu186, Asn192–Pro226, Asp227–Pro261, Asn262–Phe296, Ser297–Pro331, Ser332–Pro366, Cys367–Pro401, Asp402–Pro436, and Asp437–Pro471.

This sequence belongs to the PPR family. P subfamily.

The polypeptide is Pentatricopeptide repeat-containing protein At2g36240 (Arabidopsis thaliana (Mouse-ear cress)).